Here is a 126-residue protein sequence, read N- to C-terminus: Histone H2B.5 (126 aa).

Basic and acidic residues predominate over residues 1 to 27; the sequence is MAPKAEKKPSEKAPKADKKITKEGGSE. A disordered region spans residues 1 to 34; the sequence is MAPKAEKKPSEKAPKADKKITKEGGSERKKKTKK. Residue Ala-2 is modified to N,N,N-trimethylalanine; alternate. A N,N-dimethylalanine; alternate modification is found at Ala-2. Residue Ala-2 is modified to N-methylalanine; alternate. An N6-methyllysine modification is found at Lys-4. Lys-7, Lys-12, Lys-18, and Lys-19 each carry N6-acetyllysine. Lys-122 participates in a covalent cross-link: Glycyl lysine isopeptide (Lys-Gly) (interchain with G-Cter in ubiquitin).

It belongs to the histone H2B family. The nucleosome is a histone octamer containing two molecules each of H2A, H2B, H3 and H4 assembled in one H3-H4 heterotetramer and two H2A-H2B heterodimers. The octamer wraps approximately 147 bp of DNA. Post-translationally, can be acetylated to form H2BK6ac, H2BK33ac and H2BK34ac. Monoubiquitinated by BRE1 to form H2BK143ub1 and deubiquitinated by UBP26. Required for heterochromatic histone H3 di- and trimethylation at H3K4me. May give a specific tag for epigenetic transcriptional activation.

The protein resides in the nucleus. The protein localises to the chromosome. Core component of nucleosome. Nucleosomes wrap and compact DNA into chromatin, limiting DNA accessibility to the cellular machineries which require DNA as a template. Histones thereby play a central role in transcription regulation, DNA repair, DNA replication and chromosomal stability. DNA accessibility is regulated via a complex set of post-translational modifications of histones, also called histone code, and nucleosome remodeling. In Arabidopsis thaliana (Mouse-ear cress), this protein is Histone H2B.5.